The primary structure comprises 100 residues: Aspartyl/glutamyl-tRNA(Asn/Gln) amidotransferase subunit C (100 aa).

The protein belongs to the GatC family. In terms of assembly, heterotrimer of A, B and C subunits.

The enzyme catalyses L-glutamyl-tRNA(Gln) + L-glutamine + ATP + H2O = L-glutaminyl-tRNA(Gln) + L-glutamate + ADP + phosphate + H(+). The catalysed reaction is L-aspartyl-tRNA(Asn) + L-glutamine + ATP + H2O = L-asparaginyl-tRNA(Asn) + L-glutamate + ADP + phosphate + 2 H(+). Its function is as follows. Allows the formation of correctly charged Asn-tRNA(Asn) or Gln-tRNA(Gln) through the transamidation of misacylated Asp-tRNA(Asn) or Glu-tRNA(Gln) in organisms which lack either or both of asparaginyl-tRNA or glutaminyl-tRNA synthetases. The reaction takes place in the presence of glutamine and ATP through an activated phospho-Asp-tRNA(Asn) or phospho-Glu-tRNA(Gln). In Rickettsia rickettsii (strain Sheila Smith), this protein is Aspartyl/glutamyl-tRNA(Asn/Gln) amidotransferase subunit C.